We begin with the raw amino-acid sequence, 334 residues long: Flavonol synthase/flavanone 3-hydroxylase (334 aa).

Residues Asp196–Pro295 form the Fe2OG dioxygenase domain. His220, Asp222, and His276 together coordinate Fe cation.

The protein belongs to the iron/ascorbate-dependent oxidoreductase family. The cofactor is Fe cation. Requires L-ascorbate as cofactor.

It is found in the cytoplasm. It carries out the reaction a (2R,3R)-dihydroflavonol + 2-oxoglutarate + O2 = a flavonol + succinate + CO2 + H2O. It catalyses the reaction a (2S)-flavan-4-one + 2-oxoglutarate + O2 = a (2R,3R)-dihydroflavonol + succinate + CO2. It participates in secondary metabolite biosynthesis; flavonoid biosynthesis. In terms of biological role, catalyzes the formation of flavonols from dihydroflavonols. It can act on dihydrokaempferol to produce kaempferol, on dihydroquercetin to produce quercitin and on dihydromyricetin to produce myricetin. The chain is Flavonol synthase/flavanone 3-hydroxylase (FLS) from Eustoma exaltatum subsp. russellianum (Bluebells).